The chain runs to 103 residues: Interleukin-8 (103 aa).

The signal sequence occupies residues 1–25 (MTSKLAVAFLAVFLLSAALCEAAVL). R27 bears the Citrulline mark. Cystine bridges form between C34–C61 and C36–C77.

The protein belongs to the intercrine alpha (chemokine CxC) family. As to quaternary structure, homodimer. Interacts with TNFAIP6 (via Link domain); this interaction interferes with chemokine binding to glycosaminoglycans. Citrullination at Arg-27 prevents proteolysis, and dampens tissue inflammation, it also enhances leukocytosis, possibly through impaired chemokine clearance from the blood circulation. As to expression, alveolar macrophages.

It is found in the secreted. Its function is as follows. Chemotactic factor that mediates inflammatory response by attracting neutrophils, basophils, and T-cells to clear pathogens and protect the host from infection. Also plays an important role in neutrophil activation. Released in response to an inflammatory stimulus, exerts its effect by binding to the G-protein-coupled receptors CXCR1 and CXCR2, primarily found in neutrophils, monocytes and endothelial cells. G-protein heterotrimer (alpha, beta, gamma subunits) constitutively binds to CXCR1/CXCR2 receptor and activation by IL8 leads to beta and gamma subunits release from Galpha (GNAI2 in neutrophils) and activation of several downstream signaling pathways including PI3K and MAPK pathways. This Sus scrofa (Pig) protein is Interleukin-8 (CXCL8).